The primary structure comprises 251 residues: Small ribosomal subunit protein uS2 (251 aa).

The protein belongs to the universal ribosomal protein uS2 family.

The sequence is that of Small ribosomal subunit protein uS2 (rpsB) from Arthrospira platensis (Spirulina platensis).